Reading from the N-terminus, the 455-residue chain is Probable ATP-dependent RNA helicase DDX47 (455 aa).

Residues 1–10 are compositionally biased toward basic and acidic residues; it reads MAAPEEHDSP. The interval 1 to 20 is disordered; sequence MAAPEEHDSPTEASQPIVEE. An N-acetylalanine modification is found at alanine 2. Phosphoserine is present on serine 9. The short motif at 24–52 is the Q motif element; it reads KTFKDLGVTDVLCEACDQLGWTKPTKIQI. The 172-residue stretch at 55–226 folds into the Helicase ATP-binding domain; sequence IPLALQGRDI…RAALKNPVKC (172 aa). 68–75 contacts ATP; sequence AETGSGKT. Threonine 149 is modified (phosphothreonine). The DEAD box signature appears at 174–177; it reads DEAD. The region spanning 237–397 is the Helicase C-terminal domain; that stretch reads KLQQYYIFIP…GFPTQDDEVM (161 aa). The segment covering 413-428 has biased composition (basic and acidic residues); the sequence is ELREHGEKKKRSREDA. The segment at 413-455 is disordered; it reads ELREHGEKKKRSREDAGDNDDTEGAIGVRNKVAGGKMKKRKGR. At serine 424 the chain carries Phosphoserine.

The protein belongs to the DEAD box helicase family. DDX47/RRP3 subfamily. In terms of assembly, interacts with AGO1 and AGO2. Interacts with GABARAP. Interacts with NOL8; the interaction is RNA-dependent. As to expression, expressed in skin, lung and breast. Also expressed in the brain.

It is found in the nucleus. Its subcellular location is the nucleolus. The enzyme catalyses ATP + H2O = ADP + phosphate + H(+). Required for efficient ribosome biogenesis. May have a role in mRNA splicing. Involved in apoptosis. In Homo sapiens (Human), this protein is Probable ATP-dependent RNA helicase DDX47 (DDX47).